A 529-amino-acid chain; its full sequence is MTILSAERAPSRRILAVVTVGRYTCAAPILEICRILHARGHTIEFACLDGHQGLATPHAFVSKIHVVGRNMTVEEDKALYRLFDESDASNAEGRKGTFRALMKFHSWWPETYRNLKALVSDPAYRPDFILADLLADACIDIMNEFEIPLAVHYPQMPIQMAPQKYIPGMPGAQLKHLSSEHASLWDRLQEEYHVLQLIFAMKDYILFQRKMRREMGLGPRPPPRKPDYLVLVNSFFGLEVPKDLPPLMIPIGPVLADTFTPLDTTPELLNFLQVHRKVIYVAFGSHVELPAWRVRRLIKGLVQALESGDIDGVIWAWKDRASVMKDLESDPSSIDDAKVEYSAILDNRNEGFKIVGWVPQRAILDHSSVCLYLSHCGASSTMEAVYHGVPVVAMPVYGDQLANGKRLEAAGVGINMNRKNFTAEELSANIKTLVRDEQGSFARNVLRLQRIATANSRRKYVAADRIEEVMYDAELLSSDEAVVSRPMHLQTPDSRMSWFKANNLDLYLVYIALFAVPVGAVRWISNNWL.

N-linked (GlcNAc...) asparagine glycans are attached at residues Asn-70 and Asn-420. A helical membrane pass occupies residues 504–524; that stretch reads LDLYLVYIALFAVPVGAVRWI.

It belongs to the glycosyltransferase 28 family.

It is found in the membrane. The enzyme catalyses stromemycin aglycone + UDP-alpha-D-glucose = stromemycin + UDP + H(+). The protein operates within mycotoxin biosynthesis. Functionally, UDP-glycosyltransferase; part of the gene cluster that mediates the biosynthesis of stromemycin, a depside C-glucoside with two unsaturated C9 side chains belonging to aromatic polyketide glycosides. Acts as the tailoring enzyme responsible for 3-C-glucosylation of bininalkenylresorcylic acid to yield stromemycin. In Talaromyces amestolkiae, this protein is UDP-glycosyltransferase.